Reading from the N-terminus, the 212-residue chain is Large ribosomal subunit protein uL4 (212 aa).

The protein belongs to the universal ribosomal protein uL4 family. As to quaternary structure, part of the 50S ribosomal subunit.

In terms of biological role, one of the primary rRNA binding proteins, this protein initially binds near the 5'-end of the 23S rRNA. It is important during the early stages of 50S assembly. It makes multiple contacts with different domains of the 23S rRNA in the assembled 50S subunit and ribosome. Functionally, forms part of the polypeptide exit tunnel. The protein is Large ribosomal subunit protein uL4 of Caulobacter vibrioides (strain ATCC 19089 / CIP 103742 / CB 15) (Caulobacter crescentus).